The following is a 278-amino-acid chain: 3-methyl-2-oxobutanoate hydroxymethyltransferase (278 aa).

2 residues coordinate Mg(2+): aspartate 52 and aspartate 91. 3-methyl-2-oxobutanoate-binding positions include 52-53, aspartate 91, and lysine 121; that span reads DS. Glutamate 123 lines the Mg(2+) pocket. Glutamate 190 (proton acceptor) is an active-site residue.

Belongs to the PanB family. In terms of assembly, homodecamer; pentamer of dimers. Requires Mg(2+) as cofactor.

The protein localises to the cytoplasm. The enzyme catalyses 3-methyl-2-oxobutanoate + (6R)-5,10-methylene-5,6,7,8-tetrahydrofolate + H2O = 2-dehydropantoate + (6S)-5,6,7,8-tetrahydrofolate. The protein operates within cofactor biosynthesis; (R)-pantothenate biosynthesis; (R)-pantoate from 3-methyl-2-oxobutanoate: step 1/2. In terms of biological role, catalyzes the reversible reaction in which hydroxymethyl group from 5,10-methylenetetrahydrofolate is transferred onto alpha-ketoisovalerate to form ketopantoate. The polypeptide is 3-methyl-2-oxobutanoate hydroxymethyltransferase (Rhodospirillum rubrum (strain ATCC 11170 / ATH 1.1.1 / DSM 467 / LMG 4362 / NCIMB 8255 / S1)).